Consider the following 359-residue polypeptide: Peptide chain release factor 1 (359 aa).

Position 238 is an N5-methylglutamine (Gln238).

Belongs to the prokaryotic/mitochondrial release factor family. In terms of processing, methylated by PrmC. Methylation increases the termination efficiency of RF1.

The protein resides in the cytoplasm. In terms of biological role, peptide chain release factor 1 directs the termination of translation in response to the peptide chain termination codons UAG and UAA. The polypeptide is Peptide chain release factor 1 (Mycoplasmopsis pulmonis (strain UAB CTIP) (Mycoplasma pulmonis)).